The chain runs to 456 residues: Bifunctional protein GlmU (456 aa).

The segment at 1–229 is pyrophosphorylase; the sequence is MLNSAMSVVI…ISETDGVNNR (229 aa). UDP-N-acetyl-alpha-D-glucosamine contacts are provided by residues 11-14, K25, Q76, 81-82, 103-105, G140, E154, N169, and N227; these read LAAG, GT, and YGD. A Mg(2+)-binding site is contributed by D105. N227 contacts Mg(2+). Residues 230–250 form a linker region; the sequence is LQLSRLERIYQAEQAEKLLLS. The tract at residues 251–456 is N-acetyltransferase; the sequence is GVMLRDPARF…QGWQRPVKKK (206 aa). R333 and K351 together coordinate UDP-N-acetyl-alpha-D-glucosamine. H363 (proton acceptor) is an active-site residue. Residues Y366 and N377 each contribute to the UDP-N-acetyl-alpha-D-glucosamine site. Acetyl-CoA contacts are provided by residues A380, 386 to 387, S405, A423, and R440; that span reads NY.

The protein in the N-terminal section; belongs to the N-acetylglucosamine-1-phosphate uridyltransferase family. In the C-terminal section; belongs to the transferase hexapeptide repeat family. Homotrimer. The cofactor is Mg(2+).

The protein resides in the cytoplasm. It carries out the reaction alpha-D-glucosamine 1-phosphate + acetyl-CoA = N-acetyl-alpha-D-glucosamine 1-phosphate + CoA + H(+). It catalyses the reaction N-acetyl-alpha-D-glucosamine 1-phosphate + UTP + H(+) = UDP-N-acetyl-alpha-D-glucosamine + diphosphate. The protein operates within nucleotide-sugar biosynthesis; UDP-N-acetyl-alpha-D-glucosamine biosynthesis; N-acetyl-alpha-D-glucosamine 1-phosphate from alpha-D-glucosamine 6-phosphate (route II): step 2/2. Its pathway is nucleotide-sugar biosynthesis; UDP-N-acetyl-alpha-D-glucosamine biosynthesis; UDP-N-acetyl-alpha-D-glucosamine from N-acetyl-alpha-D-glucosamine 1-phosphate: step 1/1. It functions in the pathway bacterial outer membrane biogenesis; LPS lipid A biosynthesis. Catalyzes the last two sequential reactions in the de novo biosynthetic pathway for UDP-N-acetylglucosamine (UDP-GlcNAc). The C-terminal domain catalyzes the transfer of acetyl group from acetyl coenzyme A to glucosamine-1-phosphate (GlcN-1-P) to produce N-acetylglucosamine-1-phosphate (GlcNAc-1-P), which is converted into UDP-GlcNAc by the transfer of uridine 5-monophosphate (from uridine 5-triphosphate), a reaction catalyzed by the N-terminal domain. This is Bifunctional protein GlmU from Salmonella gallinarum (strain 287/91 / NCTC 13346).